A 465-amino-acid polypeptide reads, in one-letter code: Ribulose bisphosphate carboxylase large chain (465 aa).

K4 bears the N6,N6,N6-trimethyllysine mark. The substrate site is built by N113 and T163. K165 acts as the Proton acceptor in catalysis. Residue K167 participates in substrate binding. 3 residues coordinate Mg(2+): K191, D193, and E194. K191 bears the N6-carboxylysine mark. The active-site Proton acceptor is the H284. The substrate site is built by R285, H317, and S369.

It belongs to the RuBisCO large chain family. Type I subfamily. In terms of assembly, heterohexadecamer of 8 large chains and 8 small chains; disulfide-linked. The disulfide link is formed within the large subunit homodimers. The cofactor is Mg(2+). In terms of processing, the disulfide bond which can form in the large chain dimeric partners within the hexadecamer appears to be associated with oxidative stress and protein turnover.

It is found in the plastid. Its subcellular location is the chloroplast. The catalysed reaction is 2 (2R)-3-phosphoglycerate + 2 H(+) = D-ribulose 1,5-bisphosphate + CO2 + H2O. The enzyme catalyses D-ribulose 1,5-bisphosphate + O2 = 2-phosphoglycolate + (2R)-3-phosphoglycerate + 2 H(+). Its function is as follows. RuBisCO catalyzes two reactions: the carboxylation of D-ribulose 1,5-bisphosphate, the primary event in carbon dioxide fixation, as well as the oxidative fragmentation of the pentose substrate in the photorespiration process. Both reactions occur simultaneously and in competition at the same active site. This Cassia fistula (Golden shower tree) protein is Ribulose bisphosphate carboxylase large chain.